Consider the following 137-residue polypeptide: Large ribosomal subunit protein uL16 (137 aa).

Over residues 1–13 the composition is skewed to basic residues; it reads MLQPKRRKYRKEQ. Residues 1-22 form a disordered region; that stretch reads MLQPKRRKYRKEQKGRNTGVAT.

This sequence belongs to the universal ribosomal protein uL16 family. As to quaternary structure, part of the 50S ribosomal subunit.

In terms of biological role, binds 23S rRNA and is also seen to make contacts with the A and possibly P site tRNAs. The polypeptide is Large ribosomal subunit protein uL16 (Polynucleobacter asymbioticus (strain DSM 18221 / CIP 109841 / QLW-P1DMWA-1) (Polynucleobacter necessarius subsp. asymbioticus)).